The chain runs to 154 residues: 3-hydroxyacyl-[acyl-carrier-protein] dehydratase FabZ (154 aa).

Residue histidine 58 is part of the active site.

The protein belongs to the thioester dehydratase family. FabZ subfamily.

Its subcellular location is the cytoplasm. The catalysed reaction is a (3R)-hydroxyacyl-[ACP] = a (2E)-enoyl-[ACP] + H2O. Involved in unsaturated fatty acids biosynthesis. Catalyzes the dehydration of short chain beta-hydroxyacyl-ACPs and long chain saturated and unsaturated beta-hydroxyacyl-ACPs. This chain is 3-hydroxyacyl-[acyl-carrier-protein] dehydratase FabZ, found in Protochlamydia amoebophila (strain UWE25).